A 258-amino-acid chain; its full sequence is Probable enoyl-CoA hydratase (258 aa).

Belongs to the enoyl-CoA hydratase/isomerase family.

It catalyses the reaction a (3S)-3-hydroxyacyl-CoA = a (2E)-enoyl-CoA + H2O. It carries out the reaction a 4-saturated-(3S)-3-hydroxyacyl-CoA = a (3E)-enoyl-CoA + H2O. It functions in the pathway lipid metabolism; fatty acid beta-oxidation. In terms of biological role, involved in the degradation of long-chain fatty acids. The polypeptide is Probable enoyl-CoA hydratase (fadB) (Bacillus subtilis (strain 168)).